Reading from the N-terminus, the 201-residue chain is MSTRSLTIFILAHVWLLMATTSIAQFVIDTSGEPVEDDEEYFIRPAITGNGGGSTLVTGNGPCPLHVGLDNTEGTLGVAVKFTPFAPQHDDDDVRLNRDLRVTFLTSTSCGQSTDWRLGEKDATSGRRLIVTGRDNGAGSQGNFFRIVQTQTGGTYNIQWCPTEACPSCKVQCGTVGVIRENGKNLLALDGDALPVVFQKE.

The signal sequence occupies residues 1-24; sequence MSTRSLTIFILAHVWLLMATTSIA. 3 disulfides stabilise this stretch: cysteine 63/cysteine 110, cysteine 161/cysteine 173, and cysteine 166/cysteine 169.

It belongs to the protease inhibitor I3 (leguminous Kunitz-type inhibitor) family. Interacts with CP.

It is found in the secreted. It localises to the extracellular space. Its subcellular location is the apoplast. In terms of biological role, protease inhibitor involved in the control of mycorrhiza establishment and arbuscule development during root colonization by arbuscular mycorrhizal (AM) fungi (e.g. Rhizophagus irregularis). The polypeptide is Kunitz type trypsin inhibitor 104 (Medicago truncatula (Barrel medic)).